The sequence spans 241 residues: Glutathione S-transferase omega-1 (241 aa).

The residue at position 2 (serine 2) is an N-acetylserine. The GST N-terminal domain maps to 22 to 101; sequence GSIRIYSMRF…YLDEAYPGKK (80 aa). Catalysis depends on cysteine 32, which acts as the Nucleophile. Lysine 57 carries the N6-acetyllysine modification. Residues lysine 59, valine 72, and 85 to 86 each bind glutathione; that span reads ES. The GST C-terminal domain occupies 106–230; that stretch reads DPYEKACQKM…DWQGFLELYL (125 aa). A Phosphoserine modification is found at serine 129. Lysine 143, lysine 148, and lysine 152 each carry N6-acetyllysine.

It belongs to the GST superfamily. Omega family. Homodimer. Ubiquitous. Highest expression in liver, pancreas, skeletal muscle, spleen, thymus, colon, blood leukocyte and heart. Lowest expression in brain, placenta and lung.

It localises to the cytoplasm. Its subcellular location is the cytosol. The catalysed reaction is RX + glutathione = an S-substituted glutathione + a halide anion + H(+). It catalyses the reaction L-dehydroascorbate + 2 glutathione = glutathione disulfide + L-ascorbate. The enzyme catalyses methylarsonate + 2 glutathione + H(+) = methylarsonous acid + glutathione disulfide + H2O. With respect to regulation, monomethylarsonic acid reductase activity is competitively inhibited by 1-chloro 2,4-dinitrobenzene (CDNB) and by deoxycholate. Exhibits glutathione-dependent thiol transferase and dehydroascorbate reductase activities. Has S-(phenacyl)glutathione reductase activity. Also has glutathione S-transferase activity. Participates in the biotransformation of inorganic arsenic and reduces monomethylarsonic acid (MMA) and dimethylarsonic acid. This Homo sapiens (Human) protein is Glutathione S-transferase omega-1 (GSTO1).